The sequence spans 429 residues: Adenylosuccinate synthetase (429 aa).

GTP contacts are provided by residues 12–18 (GDEGKGK) and 40–42 (GHT). Residue Asp-13 is the Proton acceptor of the active site. Asp-13 and Gly-40 together coordinate Mg(2+). IMP is bound by residues 13 to 16 (DEGK), 38 to 41 (NAGH), Thr-128, Arg-142, Gln-223, Thr-238, and Arg-302. His-41 acts as the Proton donor in catalysis. 298 to 304 (TVTGRPR) serves as a coordination point for substrate. GTP is bound by residues Arg-304, 330 to 332 (LLD), and 412 to 414 (SVG).

Belongs to the adenylosuccinate synthetase family. Homodimer. The cofactor is Mg(2+).

It localises to the cytoplasm. It catalyses the reaction IMP + L-aspartate + GTP = N(6)-(1,2-dicarboxyethyl)-AMP + GDP + phosphate + 2 H(+). It functions in the pathway purine metabolism; AMP biosynthesis via de novo pathway; AMP from IMP: step 1/2. Functionally, plays an important role in the de novo pathway of purine nucleotide biosynthesis. Catalyzes the first committed step in the biosynthesis of AMP from IMP. The protein is Adenylosuccinate synthetase of Lactobacillus johnsonii (strain CNCM I-12250 / La1 / NCC 533).